Consider the following 292-residue polypeptide: Pantothenate synthetase (292 aa).

ATP is bound at residue 30–37 (MGFLHIGH). Catalysis depends on His-37, which acts as the Proton donor. A (R)-pantoate-binding site is contributed by Gln-61. Gln-61 is a binding site for beta-alanine. ATP is bound at residue 147–150 (GEKD). Gln-153 is a binding site for (R)-pantoate. ATP is bound by residues Val-176 and 184-187 (CSSR).

The protein belongs to the pantothenate synthetase family. As to quaternary structure, homodimer.

The protein localises to the cytoplasm. It catalyses the reaction (R)-pantoate + beta-alanine + ATP = (R)-pantothenate + AMP + diphosphate + H(+). The protein operates within cofactor biosynthesis; (R)-pantothenate biosynthesis; (R)-pantothenate from (R)-pantoate and beta-alanine: step 1/1. Catalyzes the condensation of pantoate with beta-alanine in an ATP-dependent reaction via a pantoyl-adenylate intermediate. The sequence is that of Pantothenate synthetase from Agrobacterium fabrum (strain C58 / ATCC 33970) (Agrobacterium tumefaciens (strain C58)).